The primary structure comprises 213 residues: Small ribosomal subunit protein uS5 (213 aa).

The tract at residues 1–42 is disordered; it reads MSERDRNGGRSADNNRNDRNERGGRNDRGGRNDRRNNQQDER. The S5 DRBM domain occupies 45–108; that stretch reads YIERVVTINR…EEARKNFFRV (64 aa).

Belongs to the universal ribosomal protein uS5 family. Part of the 30S ribosomal subunit. Contacts proteins S4 and S8.

With S4 and S12 plays an important role in translational accuracy. In terms of biological role, located at the back of the 30S subunit body where it stabilizes the conformation of the head with respect to the body. This Corynebacterium urealyticum (strain ATCC 43042 / DSM 7109) protein is Small ribosomal subunit protein uS5.